Consider the following 793-residue polypeptide: MNRKVGPVLEYSRRFSRVLCALRDEIRDPLQYGYQRVNTAEGSLSTSTTATSLDTIVLDTNAEDLASVPPRTLQHHQPQRTFSPILETDDTNPFLEPVEKAKSKSSLKSSRVSFDQEDDRFDEDENSFRKQREHFQKHKSHSTSEHKSQLIKELRHLLATDNRRQFQGKKHVSLDVKSAKVLEQLLKASSSSDDFEGQRKEFQERKHKSLDARHISFKFDKEPSPSSSDEDFEPSTSLLRIDADITKPVIIDLKDLDSSDEEDYISSRKHFQQSKSMSTDSRKSIRFLEMEMGTKEENMRTAVPFVRQITEEGKPKLEVYRPTTNPIYIWTQVLAALSVSLGSMVVGFSSAYTSPALVSMKDRNITSFEVTDQSGSWVGGIMPLAGLAGGILGGPMIEYLGRKNTILATATPFIISWLLIGCATHVAMVLVGRALSGLCVGIASLSLPVYLGETVQPEVRGTLGLLPTAFGNIGILLCFVAGKYLDWSGLAFLGAALPIPFLLLMFLIPETPRWYVSRNREDRARKALQWLRGRKADVEPELKGISKSHQDAERHASSSAMLDLLNKANLKPLLISLGLMFFQQLSGINAVIFYTVQIFQSAGSTIDEKLCTIIVGVVNFIATFIATVLIDRLGRKILLYISDVAMIITLMTLGTFFYMKNNGDDVSEIGWLPLAAFVVFVVGFSLGFGPIPWLMMGEILPGKIRGSAASVATAFNWSCTFVVTKTFADITASIGNHGAFWMFGSICIVGLLFVIVYVPETQGKSLEDIERKMMGRVRRMSSVANIKPLSFNM.

At 1–326 (MNRKVGPVLE…LEVYRPTTNP (326 aa)) the chain is on the cytoplasmic side. Disordered regions lie at residues 99 to 148 (EKAK…EHKS) and 213 to 235 (RHIS…FEPS). Low complexity predominate over residues 104–113 (KSSLKSSRVS). A compositionally biased stretch (acidic residues) spans 115-125 (DQEDDRFDEDE). Residues 213-223 (RHISFKFDKEP) are compositionally biased toward basic and acidic residues. Residues 327-347 (IYIWTQVLAALSVSLGSMVVG) traverse the membrane as a helical segment. Topologically, residues 348-376 (FSSAYTSPALVSMKDRNITSFEVTDQSGS) are extracellular. The N-linked (GlcNAc...) asparagine glycan is linked to Asn-364. A helical membrane pass occupies residues 377–397 (WVGGIMPLAGLAGGILGGPMI). Topologically, residues 398 to 411 (EYLGRKNTILATAT) are cytoplasmic. A helical membrane pass occupies residues 412–432 (PFIISWLLIGCATHVAMVLVG). Residues 433–434 (RA) are Extracellular-facing. A helical transmembrane segment spans residues 435 to 455 (LSGLCVGIASLSLPVYLGETV). Topologically, residues 456 to 460 (QPEVR) are cytoplasmic. The helical transmembrane segment at 461 to 481 (GTLGLLPTAFGNIGILLCFVA) threads the bilayer. Residues 482–488 (GKYLDWS) are Extracellular-facing. The helical transmembrane segment at 489-509 (GLAFLGAALPIPFLLLMFLIP) threads the bilayer. The Cytoplasmic portion of the chain corresponds to 510–572 (ETPRWYVSRN…DLLNKANLKP (63 aa)). The chain crosses the membrane as a helical span at residues 573–593 (LLISLGLMFFQQLSGINAVIF). At 594 to 609 (YTVQIFQSAGSTIDEK) the chain is on the extracellular side. The chain crosses the membrane as a helical span at residues 610 to 630 (LCTIIVGVVNFIATFIATVLI). Over 631–636 (DRLGRK) the chain is Cytoplasmic. Residues 637–657 (ILLYISDVAMIITLMTLGTFF) traverse the membrane as a helical segment. The Extracellular portion of the chain corresponds to 658–668 (YMKNNGDDVSE). Residues 669–689 (IGWLPLAAFVVFVVGFSLGFG) traverse the membrane as a helical segment. Over 690–703 (PIPWLMMGEILPGK) the chain is Cytoplasmic. Residues 704-724 (IRGSAASVATAFNWSCTFVVT) form a helical membrane-spanning segment. Topologically, residues 725–737 (KTFADITASIGNH) are extracellular. The chain crosses the membrane as a helical span at residues 738–758 (GAFWMFGSICIVGLLFVIVYV). Residues 759–793 (PETQGKSLEDIERKMMGRVRRMSSVANIKPLSFNM) are Cytoplasmic-facing.

This sequence belongs to the major facilitator superfamily. Sugar transporter (TC 2.A.1.1) family. Trehalose transporter subfamily.

The protein localises to the cell membrane. In terms of biological role, high-capacity facilitative transporter for trehalose. Does not transport maltose, sucrose or lactose. Mediates the bidirectional transfer of trehalose. Responsible for the transport of trehalose synthesized in the fat body and the incorporation of trehalose into other tissues that require a carbon source, thereby regulating trehalose levels in the hemolymph. This is Facilitated trehalose transporter Tret1 from Anopheles gambiae (African malaria mosquito).